Here is a 35-residue protein sequence, read N- to C-terminus: Photosystem II reaction center protein M (35 aa).

Residues 7-27 form a helical membrane-spanning segment; that stretch reads GFLASLLFVLVPSVFLIVLYI.

Belongs to the PsbM family. PSII is composed of 1 copy each of membrane proteins PsbA, PsbB, PsbC, PsbD, PsbE, PsbF, PsbH, PsbI, PsbJ, PsbK, PsbL, PsbM, PsbT, PsbX, PsbY, PsbZ, Psb30/Ycf12, peripheral proteins PsbO, CyanoQ (PsbQ), PsbU, PsbV and a large number of cofactors. It forms dimeric complexes.

Its subcellular location is the cellular thylakoid membrane. Functionally, one of the components of the core complex of photosystem II (PSII). PSII is a light-driven water:plastoquinone oxidoreductase that uses light energy to abstract electrons from H(2)O, generating O(2) and a proton gradient subsequently used for ATP formation. It consists of a core antenna complex that captures photons, and an electron transfer chain that converts photonic excitation into a charge separation. This subunit is found at the monomer-monomer interface. The protein is Photosystem II reaction center protein M of Synechococcus elongatus (strain ATCC 33912 / PCC 7942 / FACHB-805) (Anacystis nidulans R2).